The primary structure comprises 256 residues: 5'-nucleotidase SurE (256 aa).

4 residues coordinate a divalent metal cation: Asp-8, Asp-9, Ser-40, and Asn-92.

This sequence belongs to the SurE nucleotidase family. The cofactor is a divalent metal cation.

The protein resides in the cytoplasm. The catalysed reaction is a ribonucleoside 5'-phosphate + H2O = a ribonucleoside + phosphate. Its function is as follows. Nucleotidase that shows phosphatase activity on nucleoside 5'-monophosphates. The sequence is that of 5'-nucleotidase SurE from Sinorhizobium medicae (strain WSM419) (Ensifer medicae).